The sequence spans 246 residues: Proteasome subunit alpha (246 aa).

The protein belongs to the peptidase T1A family. The 20S proteasome core is composed of 14 alpha and 14 beta subunits that assemble into four stacked heptameric rings, resulting in a barrel-shaped structure. The two inner rings, each composed of seven catalytic beta subunits, are sandwiched by two outer rings, each composed of seven alpha subunits. The catalytic chamber with the active sites is on the inside of the barrel. Has a gated structure, the ends of the cylinder being occluded by the N-termini of the alpha-subunits. Is capped by the proteasome-associated ATPase, ARC. Can also interact with the bacterial proteasome activator Bpa through the C-terminal hydrophobic-tyrosine-X motif (HbYX motif) of Bpa; Bpa forms a homooligomeric ring-like structure which stacks co-axially with the proteasomal alpha-rings. Pupylated at an undetermined lysine residue by the prokaryotic ubiquitin-like protein Pup with the help of the ligase PafA, which leads to its degradation by the proteasome and thereby constitutes a negative auto-regulation.

The protein localises to the cytoplasm. The protein operates within protein degradation; proteasomal Pup-dependent pathway. Its activity is regulated as follows. The formation of the proteasomal ATPase ARC-20S proteasome complex, likely via the docking of the C-termini of ARC into the intersubunit pockets in the alpha-rings, may trigger opening of the gate for substrate entry. Interconversion between the open-gate and close-gate conformations leads to a dynamic regulation of the 20S proteasome proteolysis activity. PPS auto-regulates its own activity via pupylation and degradation of its components. Peptidolytic activity is inhibited by N-acetyl-Leu-Leu-norleucinal (Ac-LLnL) in vitro. Its function is as follows. Component of the proteasome core, a large protease complex with broad specificity involved in protein degradation. The M.smegmatis proteasome is able to cleave oligopeptides after hydrophobic residues, thus displaying chymotrypsin-like activity. In complex with the ATPase Mpa, degrades protein targets conjugated to a prokaryotic ubiquitin-like protein (Pup). Identified substrates of the M.smegmatis proteasome are the pupylated SodA and Ino1 proteins. The Pup-proteasome system (PPS) is essential for survival under starvation; PPS likely functions to recycle amino acids under nitrogen starvation, thereby enabling the cell to maintain basal metabolic activities. This chain is Proteasome subunit alpha, found in Mycolicibacterium smegmatis (strain ATCC 700084 / mc(2)155) (Mycobacterium smegmatis).